A 372-amino-acid chain; its full sequence is NAD(P)H-quinone oxidoreductase subunit 1 (372 aa).

8 consecutive transmembrane segments (helical) span residues 27 to 47, 97 to 117, 128 to 148, 176 to 196, 204 to 224, 266 to 286, 308 to 328, and 347 to 367; these read IIWLPLPMLIVLVSAVVGVLV, ILFTTGPILVLVPVILSWLIV, VGIGIFLWIALSSIQPIGLLM, LALSVLAVVLMTNSLSTIDIV, ILSWNIWRQPVGFIIFWICAL, ILSALLVSILYLGGWGFPIPV, SIGIIMTVLKAYLLVFIAILL, and FLLPISLANLLLTAGLKLALP.

Belongs to the complex I subunit 1 family. In terms of assembly, NDH-1 is composed of at least 11 different subunits.

It is found in the cellular thylakoid membrane. The enzyme catalyses a plastoquinone + NADH + (n+1) H(+)(in) = a plastoquinol + NAD(+) + n H(+)(out). It carries out the reaction a plastoquinone + NADPH + (n+1) H(+)(in) = a plastoquinol + NADP(+) + n H(+)(out). Its function is as follows. NDH-1 shuttles electrons from an unknown electron donor, via FMN and iron-sulfur (Fe-S) centers, to quinones in the respiratory and/or the photosynthetic chain. The immediate electron acceptor for the enzyme in this species is believed to be plastoquinone. Couples the redox reaction to proton translocation, and thus conserves the redox energy in a proton gradient. The polypeptide is NAD(P)H-quinone oxidoreductase subunit 1 (Prochlorococcus marinus (strain MIT 9515)).